The primary structure comprises 101 residues: Urease subunit beta (101 aa).

Belongs to the urease beta subunit family. As to quaternary structure, heterotrimer of UreA (gamma), UreB (beta) and UreC (alpha) subunits. Three heterotrimers associate to form the active enzyme.

The protein localises to the cytoplasm. It catalyses the reaction urea + 2 H2O + H(+) = hydrogencarbonate + 2 NH4(+). It functions in the pathway nitrogen metabolism; urea degradation; CO(2) and NH(3) from urea (urease route): step 1/1. The polypeptide is Urease subunit beta (Ralstonia pickettii (strain 12J)).